The sequence spans 230 residues: MESISPVSNQLLQPTTTSSNSDRSRRKRKKKSSPSSVEKSPSPSISLEKWRSEKQQQIYSTKLVHALRELRISQQPSSSSSSSIPRGGRAVREVADRALAVAARGKTLWSRAILSKAVKLKFRKHKRQRISNPTTTTLTTGSIRSKKQRATVLRLKAKGLPAVQRKVKVLSRLVPGCRKQSLPVVLEETTDYIAAMEMQIRTMTAILSAVSSSPPPPTPGHEGGQTHMLG.

The span at 1-17 (MESISPVSNQLLQPTTT) shows a compositional bias: polar residues. The interval 1–52 (MESISPVSNQLLQPTTTSSNSDRSRRKRKKKSSPSSVEKSPSPSISLEKWRS) is disordered. Positions 33 to 46 (SPSSVEKSPSPSIS) are enriched in low complexity. Positions 147-196 (KQRATVLRLKAKGLPAVQRKVKVLSRLVPGCRKQSLPVVLEETTDYIAAM) constitute a bHLH domain. The tract at residues 210–230 (VSSSPPPPTPGHEGGQTHMLG) is disordered.

As to quaternary structure, homodimer. Interacts with PRE3.

It localises to the nucleus. Its function is as follows. Atypical bHLH transcription factor probably unable to bind DNA. Negatively regulates brassinosteroid signaling. In Arabidopsis thaliana (Mouse-ear cress), this protein is Transcription factor bHLH147 (BHLH147).